Here is a 280-residue protein sequence, read N- to C-terminus: Tumor necrosis factor ligand superfamily member 6 (280 aa).

Residues methionine 1 to leucine 80 are Cytoplasmic-facing. The disordered stretch occupies residues serine 20–leucine 70. A compositionally biased stretch (pro residues) spans arginine 43–proline 69. The helical; Signal-anchor for type II membrane protein transmembrane segment at cysteine 81–phenylalanine 101 threads the bilayer. At glutamine 102–leucine 280 the chain is on the extracellular side. The interval threonine 117 to arginine 155 is disordered. The THD domain occupies lysine 144–leucine 280. N-linked (GlcNAc...) asparagine glycosylation is present at asparagine 183. Cysteine 201 and cysteine 232 are disulfide-bonded. 2 N-linked (GlcNAc...) asparagine glycosylation sites follow: asparagine 249 and asparagine 259.

The protein belongs to the tumor necrosis factor family. Homotrimer. Interacts with ARHGAP9, BAIAP2L1, BTK, CACNB3, CACNB4, CRK, DLG2, DNMBP, DOCK4, EPS8L3, FGR, FYB1, FYN, HCK, ITK, ITSN2, KALRN, LYN, MACC1, MIA, MPP4, MYO15A, NCF1, NCK1, NCK2, NCKIPSD, OSTF1, PIK3R1, PSTPIP1, RIMBP3C, SAMSN1, SH3GL3, SH3PXD2B, SH3PXD2A, SH3RF2, SKAP2, SNX33, SNX9, SORBS3, SPTA1, SRC, SRGAP1, SRGAP2, SRGAP3, TEC, TJP3 and YES1. Post-translationally, the soluble form derives from the membrane form by proteolytic processing. The membrane-bound form undergoes two successive intramembrane proteolytic cleavages. The first one is processed by ADAM10 producing an N-terminal fragment, which lacks the receptor-binding extracellular domain. This ADAM10-processed FasL (FasL APL) remnant form is still membrane anchored and further processed by SPPL2A that liberates the FasL intracellular domain (FasL ICD). FasL shedding by ADAM10 is a prerequisite for subsequent intramembrane cleavage by SPPL2A in T-cells. Phosphorylated by FGR on tyrosine residues; this is required for ubiquitination and subsequent internalization. In terms of processing, N-glycosylated. Glycosylation enhances apoptotic activity. Post-translationally, monoubiquitinated.

The protein localises to the cell membrane. Its subcellular location is the cytoplasmic vesicle lumen. It is found in the lysosome lumen. It localises to the secreted. The protein resides in the nucleus. Functionally, cytokine that binds to TNFRSF6/FAS, a receptor that transduces the apoptotic signal into cells. Involved in cytotoxic T-cell-mediated apoptosis, natural killer cell-mediated apoptosis and in T-cell development. Initiates fratricidal/suicidal activation-induced cell death (AICD) in antigen-activated T-cells contributing to the termination of immune responses. TNFRSF6/FAS-mediated apoptosis has also a role in the induction of peripheral tolerance. Binds to TNFRSF6B/DcR3, a decoy receptor that blocks apoptosis. In terms of biological role, induces FAS-mediated activation of NF-kappa-B, initiating non-apoptotic signaling pathways. Can induce apoptosis but does not appear to be essential for this process. Cytoplasmic form induces gene transcription inhibition. The chain is Tumor necrosis factor ligand superfamily member 6 (FASLG) from Macaca fascicularis (Crab-eating macaque).